The following is a 376-amino-acid chain: Lipid-A-disaccharide synthase (376 aa).

Belongs to the LpxB family.

The catalysed reaction is a lipid X + a UDP-2-N,3-O-bis[(3R)-3-hydroxyacyl]-alpha-D-glucosamine = a lipid A disaccharide + UDP + H(+). Its pathway is bacterial outer membrane biogenesis; LPS lipid A biosynthesis. In terms of biological role, condensation of UDP-2,3-diacylglucosamine and 2,3-diacylglucosamine-1-phosphate to form lipid A disaccharide, a precursor of lipid A, a phosphorylated glycolipid that anchors the lipopolysaccharide to the outer membrane of the cell. This Coxiella burnetii (strain Dugway 5J108-111) protein is Lipid-A-disaccharide synthase.